The chain runs to 966 residues: Polycystin-2 (966 aa).

Residues 1–106 form a disordered region; it reads MVNSRRVQPQ…DDDEVEGEEG (106 aa). Residues 1-217 are Cytoplasmic-facing; sequence MVNSRRVQPQ…NANREKYLKS (217 aa). The segment covering 30–44 has biased composition (gly residues); the sequence is VAGGAGLAVPGGLGE. Residues 46–56 are compositionally biased toward basic and acidic residues; it reads RGLEIEMERIR. The span at 58–79 shows a compositional bias: low complexity; that stretch reads AAARDPPAGASASPSPPLSSCS. A phosphoserine mark is found at Ser72 and Ser76. Over residues 91-105 the composition is skewed to acidic residues; it reads EAEEDDDDDEVEGEE. Arg135 carries the post-translational modification Omega-N-methylarginine. Positions 147–179 are disordered; sequence HLSGRRRRLEDQGAQCPSPAGGGDPLHRHLPLE. The helical transmembrane segment at 218–239 threads the bilayer; that stretch reads VLRELVTYLFFLVVLCILTYGM. Residues 240–466 lie on the Extracellular side of the membrane; that stretch reads MSSNVYYYTR…PVKLIRYVTA (227 aa). 3 N-linked (GlcNAc...) asparagine glycosylation sites follow: Asn297, Asn303, and Asn326. The cysteines at positions 329 and 342 are disulfide-linked. Asn360 and Asn373 each carry an N-linked (GlcNAc...) asparagine glycan. Residues 467–487 traverse the membrane as a helical segment; that stretch reads FDFFLAACEIIFCFFIIYYVV. At 488 to 503 the chain is on the cytoplasmic side; sequence EEILEIRIHRLSYFRS. Residues 504–524 form a helical membrane-spanning segment; sequence FWNCLDVVIVVLSVVAMVINI. The Extracellular portion of the chain corresponds to 525–550; that stretch reads YRMSNAEGLLQFLEDQNSFPNFEHVA. Residues 551-571 form a helical membrane-spanning segment; sequence YWQIQFNNISAVMVFLVWIKL. Residue Gln555 participates in cholesterol binding. The Cytoplasmic segment spans residues 572–595; it reads FKFINFNRTMSQLSTTMSRCAKDL. A helical transmembrane segment spans residues 596-617; sequence FGFTIMFSIIFLAYAQLAYLVF. Residues 618-629 lie on the Extracellular side of the membrane; sequence GTQVDDFSTFQE. An intramembrane region (pore-forming) is located at residues 630-644; it reads CIFTQFRIILGDINF. Ca(2+) is bound at residue Leu639. The Selectivity filter motif lies at 639 to 641; sequence LGD. Over 645-652 the chain is Extracellular; that stretch reads AEIEEANR. A helical membrane pass occupies residues 653 to 673; the sequence is VLGPLYFTTFVFFMFFILLNM. Residues 674-966 are Cytoplasmic-facing; that stretch reads FLAIINDSYS…GGNGSANVHA (293 aa). The region spanning 748-783 is the EF-hand domain; the sequence is HTDAEIEAIFTKYDQDGDQELTEREHQQMRDDLEKE. 5 residues coordinate Ca(2+): Asp761, Asp763, Asp765, Glu767, and Glu772. The segment at 764–828 is disordered; sequence GDQELTEREH…GHSSRRRGSI (65 aa). The segment covering 768-793 has biased composition (basic and acidic residues); the sequence is LTEREHQQMRDDLEKEREDLDLEHSS. The span at 794-805 shows a compositional bias: low complexity; that stretch reads LPRPMSSRSFPR. Residues Ser799, Ser806, Ser810, and Ser827 each carry the phosphoserine modification. The linker stretch occupies residues 801 to 820; that stretch reads RSFPRSLDDSEEEDDEDSGH. Residues 808 to 819 are important for interaction with PACS1 and PACS2; it reads DDSEEEDDEDSG. The stretch at 831–870 forms a coiled coil; that stretch reads GVSYEEFQVLVRRVDRMEHSIGSIVSKIDAVIVKLEIMER. Residues 914-966 are disordered; sequence WESDDAASQTGHGVSTQVGLGGQPHPRNPRPPSSQSAEGLEGGGGNGSANVHA. Residues 919–931 are compositionally biased toward polar residues; the sequence is AASQTGHGVSTQV.

Belongs to the polycystin family. As to quaternary structure, homotetramer. Component of the heterotetrameric polycystin channel complex with PKD1; the tetramer contains one PKD1 chain and three PKD2 chains. Interaction with PKD1 is required for ciliary localization. Isoform 1 interacts with PKD1 while isoform 3 does not. Interacts with PKD1L1. Interacts with CD2AP. Interacts with HAX1. Interacts with NEK8. Part of a complex containing AKAP5, ADCY5, ADCY6 and PDE4C. Interacts (via C-terminus) with TRPV4 (via C-terminus). Interacts (via C-terminal acidic region) with PACS1 and PACS2; these interactions retain the protein in the endoplasmic reticulum and prevent trafficking to the cell membrane. Interacts with TMEM33; enhancing its opening at the ER membrane. Interacts with TMEM120A; TMEM120A inhibits PKD2 channel activity through the physical association of PKD2 with TMEM120A. Interacts (via N-terminus) with RYR2; regulates RYR2 channel activity. Post-translationally, N-glycosylated. The four subunits in a tetramer probably differ in the extent of glycosylation; simultaneous glycosylation of all experimentally validated sites would probably create steric hindrance. Sumoylated by SUMO1; sumoylation regulates PKD2 membrane recycling and is necessary for intravascular pressure-induced arterial contractility. In terms of processing, phosphorylated. Phosphorylation is important for protein function; a mutant that lacks the N-terminal phosphorylation sites cannot complement a zebrafish pkd2-deficient mutant. PKD-mediated phosphorylation at the C-terminus regulates its function in the release of Ca(2+) stores from the endoplasmic reticulum. Phosphorylation at Ser-810 regulates PKD2 trafficking. Phosphorylation at Ser-72 is required for PKD2 trafficking to or retention at the lateral plasma membrane. Phosphorylation at Ser-799, Ser-810 and Ser-827 regulates PKD2 channel activity. As to expression, detected in kidney epithelium (at protein level). Highly expressed on basolateral membranes in distal convoluted tubules and medullary thick ascending limbs of Henle. Detected at much lower levels in cortical and medullary collecting tubules, and not detected in the glomerular tuft, in thin limbs of Henle, interstitium and blood vessels (at protein level). Expressed in mesenchymally derived structures in the developing embryo at day 12.5. Isoform 1 is predominantly expressed in kidney at all developmental stages with high levels also detected in lung. Isoform 3 shows highest expression in brain with lower expression in kidney and lung, low levels in thymus and is hardly detectable in liver.

The protein resides in the cell projection. It localises to the cilium membrane. The protein localises to the cell membrane. Its subcellular location is the basolateral cell membrane. It is found in the cytoplasmic vesicle membrane. The protein resides in the endoplasmic reticulum membrane. It localises to the golgi apparatus. The protein localises to the vesicle. Its subcellular location is the secreted. It is found in the extracellular exosome. It carries out the reaction K(+)(in) = K(+)(out). The catalysed reaction is Na(+)(in) = Na(+)(out). The enzyme catalyses Ca(2+)(in) = Ca(2+)(out). Its activity is regulated as follows. Channel activity is regulated by phosphorylation. The channel is activated by increased cytoplasmic Ca(2+) (in the uM range) and by membrane depolarization. TMEM120A inhibits the channel activity of PKD2, and mediates mechanosensitivity of the PKD2-TMEM120A channel complex. At the endoplasmic reticulum membrane (ER), TMEM33 enhances its channel activity. PKD1/ PKD2 complex on the plasma membrane is activated by PKD1 N-terminus. Functionally, forms a nonselective cation channel. Can function as a homotetrameric ion channel or can form heteromer with PKD1. Displays distinct function depending on its subcellular localization and regulation by its binding partners. Functions as a cation channel, with a preference for monovalent cations over divalent cations that allows K(+), Na(+) and Ca(2+) influx, with low selectivity for Ca(2+). Involved in fluid-flow mechanosensation by the primary cilium in renal epithelium. In the endoplasmic reticulum, likely functions as a K(+) channel to facilitate Ca(2+) release. The heterotetrameric PKD1/PKD2 channel has higher Ca(2+) permeability than homomeric PKD2 channel and acts as a primarily Ca(2+)-permeable channel. PKD1 and PKD2 may function through a common signaling pathway that is necessary to maintain the normal, differentiated state of renal tubule cells. Interacts with and acts as a regulator of a number of other channels, such as TRPV4, TRPC1, IP3R, RYR2, ultimately further affecting intracellular signaling, to modulate intracellular Ca(2+) signaling. Together with TRPV4, forms mechano- and thermosensitive channels in cilium. In cardiomyocytes, PKD2 modulates Ca(2+) release from stimulated RYR2 receptors through direct association. Also involved in left-right axis specification via its role in sensing nodal flow; forms a complex with PKD1L1 in cilia to facilitate flow detection in left-right patterning. Acts as a regulator of cilium length together with PKD1. Mediates systemic blood pressure and contributes to the myogenic response in cerebral arteries though vasoconstriction. This Mus musculus (Mouse) protein is Polycystin-2.